Consider the following 127-residue polypeptide: Fluoride-specific ion channel FluC (127 aa).

A run of 4 helical transmembrane segments spans residues 4–24, 35–55, 71–91, and 103–123; these read LLLA…LLSM, LGTL…FAWF, TGFC…VFLL, and VFVN…LFSA. Na(+) contacts are provided by Gly75 and Thr78.

Belongs to the fluoride channel Fluc/FEX (TC 1.A.43) family.

The protein resides in the cell inner membrane. It catalyses the reaction fluoride(in) = fluoride(out). Na(+) is not transported, but it plays an essential structural role and its presence is essential for fluoride channel function. Functionally, fluoride-specific ion channel. Important for reducing fluoride concentration in the cell, thus reducing its toxicity. In Escherichia coli O17:K52:H18 (strain UMN026 / ExPEC), this protein is Fluoride-specific ion channel FluC.